Reading from the N-terminus, the 646-residue chain is Alkyl/aryl-sulfatase BDS1 (646 aa).

At Met1 the chain carries N-acetylmethionine. His162, His164, Asp166, His167, Glu273, Glu292, and His337 together coordinate Zn(2+).

This sequence belongs to the metallo-beta-lactamase superfamily. Type III sulfatase family. The cofactor is Zn(2+).

Its function is as follows. Alkyl/aryl-sulfatase. Enables the use of SDS and 4-nitrocatechol as sulfur source. The protein is Alkyl/aryl-sulfatase BDS1 (BDS1) of Saccharomyces cerevisiae (strain ATCC 204508 / S288c) (Baker's yeast).